Here is a 494-residue protein sequence, read N- to C-terminus: Glutamyl-tRNA(Gln) amidotransferase subunit A (494 aa).

Active-site charge relay system residues include Lys80 and Ser155. The Acyl-ester intermediate role is filled by Ser179.

It belongs to the amidase family. GatA subfamily. Heterotrimer of A, B and C subunits.

It catalyses the reaction L-glutamyl-tRNA(Gln) + L-glutamine + ATP + H2O = L-glutaminyl-tRNA(Gln) + L-glutamate + ADP + phosphate + H(+). Functionally, allows the formation of correctly charged Gln-tRNA(Gln) through the transamidation of misacylated Glu-tRNA(Gln) in organisms which lack glutaminyl-tRNA synthetase. The reaction takes place in the presence of glutamine and ATP through an activated gamma-phospho-Glu-tRNA(Gln). In Lachnoclostridium phytofermentans (strain ATCC 700394 / DSM 18823 / ISDg) (Clostridium phytofermentans), this protein is Glutamyl-tRNA(Gln) amidotransferase subunit A.